The chain runs to 378 residues: Protein FAM185A (378 aa).

The sequence is that of Protein FAM185A (Fam185a) from Mus musculus (Mouse).